The sequence spans 220 residues: Protein-L-isoaspartate O-methyltransferase (220 aa).

Ser65 is a catalytic residue.

Belongs to the methyltransferase superfamily. L-isoaspartyl/D-aspartyl protein methyltransferase family.

The protein localises to the cytoplasm. The catalysed reaction is [protein]-L-isoaspartate + S-adenosyl-L-methionine = [protein]-L-isoaspartate alpha-methyl ester + S-adenosyl-L-homocysteine. In terms of biological role, catalyzes the methyl esterification of L-isoaspartyl residues in peptides and proteins that result from spontaneous decomposition of normal L-aspartyl and L-asparaginyl residues. It plays a role in the repair and/or degradation of damaged proteins. The protein is Protein-L-isoaspartate O-methyltransferase (pcm) of Pyrococcus horikoshii (strain ATCC 700860 / DSM 12428 / JCM 9974 / NBRC 100139 / OT-3).